A 410-amino-acid chain; its full sequence is CinA-like protein (410 aa).

The protein belongs to the CinA family.

This chain is CinA-like protein, found in Anaeromyxobacter sp. (strain Fw109-5).